The chain runs to 101 residues: Non-structural protein NS-S (101 aa).

It belongs to the orthobunyavirus NS-S protein family.

The chain is Non-structural protein NS-S (N) from Equus caballus (Horse).